Consider the following 86-residue polypeptide: Small ribosomal subunit protein bS16 (86 aa).

This sequence belongs to the bacterial ribosomal protein bS16 family.

The polypeptide is Small ribosomal subunit protein bS16 (Xylella fastidiosa (strain M23)).